Here is a 673-residue protein sequence, read N- to C-terminus: Annexin A6 (673 aa).

A2 bears the N-acetylalanine mark. The residue at position 13 (S13) is a Phosphoserine. Annexin repeat units lie at residues 20-91 (FNPS…GLMR), 92-163 (PPAY…VLLQ), 175-247 (DLVQ…AVVK), 251-322 (STAE…KLCG), 363-434 (FNPD…GLMM), 435-506 (PPAH…SLAT), 521-595 (EDAQ…AIVQ), and 599-670 (NKPL…AICG). Residue Y30 is modified to Phosphotyrosine. N6-acetyllysine occurs at positions 63, 68, 75, and 81. Residue Y201 is modified to Phosphotyrosine. N6-acetyllysine occurs at positions 306, 370, and 418. A Phosphoserine modification is found at S422. K483 is modified (N6-acetyllysine). Phosphoserine is present on S537. At K620 the chain carries N6-acetyllysine.

Belongs to the annexin family. Phosphorylated in response to growth factor stimulation.

The protein resides in the cytoplasm. It is found in the melanosome. In terms of biological role, may associate with CD21. May regulate the release of Ca(2+) from intracellular stores. In Bos taurus (Bovine), this protein is Annexin A6 (ANXA6).